Here is a 392-residue protein sequence, read N- to C-terminus: Tryptophan synthase beta chain (392 aa).

Lysine 86 is subject to N6-(pyridoxal phosphate)lysine.

Belongs to the TrpB family. As to quaternary structure, tetramer of two alpha and two beta chains. Pyridoxal 5'-phosphate is required as a cofactor.

The catalysed reaction is (1S,2R)-1-C-(indol-3-yl)glycerol 3-phosphate + L-serine = D-glyceraldehyde 3-phosphate + L-tryptophan + H2O. Its pathway is amino-acid biosynthesis; L-tryptophan biosynthesis; L-tryptophan from chorismate: step 5/5. Its function is as follows. The beta subunit is responsible for the synthesis of L-tryptophan from indole and L-serine. This is Tryptophan synthase beta chain (trpB) from Buchnera aphidicola subsp. Melaphis rhois.